The primary structure comprises 314 residues: WD repeat domain-containing protein 83 (314 aa).

WD repeat units follow at residues 23–62 (CNQG…LLKT), 65–104 (GHGY…VVRK), 107–146 (GHAG…PDAI), 151–188 (EAKD…MCAD), 189–228 (YLGS…LLGE), 231–272 (GHQN…LVLK), and 275–313 (VGKA…EEGG).

This sequence belongs to the WD repeat MORG1 family.

The protein localises to the cytoplasm. Functionally, molecular scaffold protein for various multimeric protein complexes. Acts as a module in the assembly of a multicomponent scaffold for the ERK pathway, linking ERK responses to specific agonists. Also involved in response to hypoxia by acting as a negative regulator of HIF1A/HIF-1-alpha. The sequence is that of WD repeat domain-containing protein 83 (wdr83) from Xenopus laevis (African clawed frog).